Consider the following 274-residue polypeptide: Leucyl/phenylalanyl-tRNA--protein transferase (274 aa).

Belongs to the L/F-transferase family.

It is found in the cytoplasm. It catalyses the reaction N-terminal L-lysyl-[protein] + L-leucyl-tRNA(Leu) = N-terminal L-leucyl-L-lysyl-[protein] + tRNA(Leu) + H(+). It carries out the reaction N-terminal L-arginyl-[protein] + L-leucyl-tRNA(Leu) = N-terminal L-leucyl-L-arginyl-[protein] + tRNA(Leu) + H(+). The catalysed reaction is L-phenylalanyl-tRNA(Phe) + an N-terminal L-alpha-aminoacyl-[protein] = an N-terminal L-phenylalanyl-L-alpha-aminoacyl-[protein] + tRNA(Phe). Functions in the N-end rule pathway of protein degradation where it conjugates Leu, Phe and, less efficiently, Met from aminoacyl-tRNAs to the N-termini of proteins containing an N-terminal arginine or lysine. This Psychrobacter cryohalolentis (strain ATCC BAA-1226 / DSM 17306 / VKM B-2378 / K5) protein is Leucyl/phenylalanyl-tRNA--protein transferase.